Reading from the N-terminus, the 155-residue chain is MADLSSLKDLGTASEAAAPAHVRKVDSLGRSYATGKRKNAVARVWVKPGSGKIIVNGKEFADYFARPVLQMILRQPIVAAARDGQFDIVATVAGGGLSGQAGAVRHGLSKALTYFEPGLRSVLKKGGFLTRDSRVVERKKYGKAKARRSFQFSKR.

Belongs to the universal ribosomal protein uS9 family.

The polypeptide is Small ribosomal subunit protein uS9 (Rhizobium etli (strain CIAT 652)).